The sequence spans 371 residues: Phospho-N-acetylmuramoyl-pentapeptide-transferase (371 aa).

A run of 9 helical transmembrane segments spans residues 19–39 (LYWL…IYSG), 48–68 (IVAP…WAVP), 95–115 (TMGG…WVAA), 119–139 (NLLE…VGWF), 155–175 (AKLR…WLFL), 180–200 (ISGL…FLAI), 227–247 (AIAF…LMIF), 284–304 (AVGL…LFLV), and 349–369 (VVST…GLNA).

The protein belongs to the glycosyltransferase 4 family. MraY subfamily. Mg(2+) serves as cofactor.

It localises to the cell inner membrane. It catalyses the reaction UDP-N-acetyl-alpha-D-muramoyl-L-alanyl-gamma-D-glutamyl-meso-2,6-diaminopimeloyl-D-alanyl-D-alanine + di-trans,octa-cis-undecaprenyl phosphate = di-trans,octa-cis-undecaprenyl diphospho-N-acetyl-alpha-D-muramoyl-L-alanyl-D-glutamyl-meso-2,6-diaminopimeloyl-D-alanyl-D-alanine + UMP. The protein operates within cell wall biogenesis; peptidoglycan biosynthesis. Catalyzes the initial step of the lipid cycle reactions in the biosynthesis of the cell wall peptidoglycan: transfers peptidoglycan precursor phospho-MurNAc-pentapeptide from UDP-MurNAc-pentapeptide onto the lipid carrier undecaprenyl phosphate, yielding undecaprenyl-pyrophosphoryl-MurNAc-pentapeptide, known as lipid I. This Acaryochloris marina (strain MBIC 11017) protein is Phospho-N-acetylmuramoyl-pentapeptide-transferase.